Here is a 62-residue protein sequence, read N- to C-terminus: Toxin Tst2 (62 aa).

One can recognise an LCN-type CS-alpha/beta domain in the interval 1–62; the sequence is KEGYAMDHEG…KVWDYATNKC (62 aa). 4 disulfide bridges follow: C11/C62, C15/C38, C23/C43, and C27/C45. Position 62 is a cysteine amide (C62).

Expressed by the venom gland.

The protein resides in the secreted. In terms of biological role, alpha toxins bind voltage-independently at site-3 of sodium channels (Nav) and inhibit the inactivation of the activated channels, thereby blocking neuronal transmission. Is toxic to mice. This chain is Toxin Tst2, found in Tityus stigmurus (Brazilian scorpion).